The chain runs to 268 residues: UPF0294 protein ETA_26410 (268 aa).

The protein belongs to the UPF0294 family.

Its subcellular location is the cytoplasm. The sequence is that of UPF0294 protein ETA_26410 from Erwinia tasmaniensis (strain DSM 17950 / CFBP 7177 / CIP 109463 / NCPPB 4357 / Et1/99).